The following is a 422-amino-acid chain: Methylaspartate ammonia-lyase (422 aa).

Q175 contributes to the (2S,3S)-3-methyl-L-aspartate binding site. 3 residues coordinate Mg(2+): D239, E276, and D310. Q332 lines the (2S,3S)-3-methyl-L-aspartate pocket. The active-site Proton acceptor is K334. Residue 363–364 coordinates (2S,3S)-3-methyl-L-aspartate; it reads TC.

This sequence belongs to the methylaspartate ammonia-lyase family. In terms of assembly, homodimer. Mg(2+) is required as a cofactor.

The enzyme catalyses (2S,3S)-3-methyl-L-aspartate = mesaconate + NH4(+). It functions in the pathway amino-acid degradation; L-glutamate degradation via mesaconate pathway; acetate and pyruvate from L-glutamate: step 2/4. Involved in the methylaspartate cycle. Catalyzes the formation of the alpha,beta-unsaturated bond by the reversible anti elimination of ammonia from L-threo-beta-methylaspartate (L-threo-(2S,3S)-3-methylaspartate) to give mesaconate. This Haloarcula marismortui (strain ATCC 43049 / DSM 3752 / JCM 8966 / VKM B-1809) (Halobacterium marismortui) protein is Methylaspartate ammonia-lyase (mal).